Consider the following 83-residue polypeptide: Cytochrome c oxidase subunit 12, mitochondrial (83 aa).

In terms of domain architecture, CHCH spans 24 to 67 (TKHCWQSYVDYHKCVNMKGEDFAPCKVFWKTYNALCPLDWIEKW). A Cx9C motif motif is present at residues 27 to 37 (CWQSYVDYHKC). 2 cysteine pairs are disulfide-bonded: cysteine 27-cysteine 59 and cysteine 37-cysteine 48. Positions 48-59 (CKVFWKTYNALC) match the Cx10C motif motif. Serine 82 carries the post-translational modification Phosphoserine.

The protein belongs to the cytochrome c oxidase subunit 6B family. As to quaternary structure, component of the cytochrome c oxidase (complex IV, CIV), a multisubunit enzyme composed of 12 subunits. The complex is composed of a catalytic core of 3 subunits COX1, COX2 and COX3, encoded in the mitochondrial DNA, and 9 supernumerary subunits COX4, COX5A (or COX5B), COX6, COX7, COX8, COX9, COX12, COX13 and COX26, which are encoded in the nuclear genome. The complex exists as a monomer or a dimer and forms supercomplexes (SCs) in the inner mitochondrial membrane with a dimer of ubiquinol-cytochrome c oxidoreductase (cytochrome b-c1 complex, complex III, CIII), resulting in 2 different assemblies (supercomplexes III(2)IV and III(2)IV(2)).

It localises to the mitochondrion inner membrane. It participates in energy metabolism; oxidative phosphorylation. Its function is as follows. Component of the cytochrome c oxidase, the last enzyme in the mitochondrial electron transport chain which drives oxidative phosphorylation. The respiratory chain contains 3 multisubunit complexes succinate dehydrogenase (complex II, CII), ubiquinol-cytochrome c oxidoreductase (cytochrome b-c1 complex, complex III, CIII) and cytochrome c oxidase (complex IV, CIV), that cooperate to transfer electrons derived from NADH and succinate to molecular oxygen, creating an electrochemical gradient over the inner membrane that drives transmembrane transport and the ATP synthase. Cytochrome c oxidase is the component of the respiratory chain that catalyzes the reduction of oxygen to water. Electrons originating from reduced cytochrome c in the intermembrane space (IMS) are transferred via the dinuclear copper A center (CU(A)) of COX2 and heme A of COX1 to the active site in COX1, a binuclear center (BNC) formed by heme A3 and copper B (CU(B)). The BNC reduces molecular oxygen to 2 water molecules unsing 4 electrons from cytochrome c in the IMS and 4 protons from the mitochondrial matrix. The chain is Cytochrome c oxidase subunit 12, mitochondrial (COX12) from Saccharomyces cerevisiae (strain ATCC 204508 / S288c) (Baker's yeast).